The following is a 93-amino-acid chain: Large ribosomal subunit protein uL23cz/uL23cy (93 aa).

It belongs to the universal ribosomal protein uL23 family. Part of the 50S ribosomal subunit.

The protein resides in the plastid. It localises to the chloroplast. Its function is as follows. Binds to 23S rRNA. The polypeptide is Large ribosomal subunit protein uL23cz/uL23cy (rpl23-A) (Phaseolus angularis (Azuki bean)).